The primary structure comprises 156 residues: Small ribosomal subunit protein uS7 (156 aa).

It belongs to the universal ribosomal protein uS7 family. Part of the 30S ribosomal subunit. Contacts proteins S9 and S11.

One of the primary rRNA binding proteins, it binds directly to 16S rRNA where it nucleates assembly of the head domain of the 30S subunit. Is located at the subunit interface close to the decoding center, probably blocks exit of the E-site tRNA. In Pasteurella multocida (strain Pm70), this protein is Small ribosomal subunit protein uS7.